We begin with the raw amino-acid sequence, 400 residues long: DNA alpha-glucosyltransferase (400 aa).

In terms of assembly, interacts with clamp protein gp45.

The catalysed reaction is Transfers an alpha-D-glucosyl residue from UDP-glucose to a hydroxymethylcytosine residue in DNA.. It functions in the pathway genetic information processing; DNA modification. In terms of biological role, catalyzes the transfer of glucose from uridine diphosphoglucose to 5-hydroxymethyl cytosine of T4 DNA to yield glucosyl 5-hydroxymethyl cytosine (glc-HMC). This DNA process seems to occur immediately after DNA synthesis since the DNA alpha-glucosyltransferase interacts with the clamp protein gp45. The glc-HMC modification protects the phage genome against its own nucleases and the host restriction endonuclease system. The glc-HMC modification also protects against the host CRISPR-Cas9 defense system. In Escherichia coli (Bacteriophage T4), this protein is DNA alpha-glucosyltransferase (agt).